We begin with the raw amino-acid sequence, 493 residues long: Acetylcholine receptor subunit beta-type unc-29 (493 aa).

The N-terminal stretch at 1-26 (MRTNRLSWILVLSVVIFLVIINTINA) is a signal peptide. Residues Asn-25 and Asn-50 are each glycosylated (N-linked (GlcNAc...) asparagine). At 27 to 232 (SDDEERLMVD…QVRIRRKTLF (206 aa)) the chain is on the extracellular side. Cys-155 and Cys-169 are disulfide-bonded. A run of 3 helical transmembrane segments spans residues 233–254 (YTVV…VFFL), 262–280 (ITLT…LLVS), and 296–317 (YLLL…IINV). At 318–445 (YFRGPRTHRM…WKYVAMIIDR (128 aa)) the chain is on the cytoplasmic side. The chain crosses the membrane as a helical span at residues 446–466 (LLLYVFFGITVGGTCGILFSA).

Belongs to the ligand-gated ion channel (TC 1.A.9) family. Acetylcholine receptor (TC 1.A.9.1) subfamily. Interacts with lev-1. Component of nicotinic acetylcholine receptor composed of 2 non-alpha subunits lev-1 and unc-29, and 3 alpha subunits unc-38, unc-63 and lev-8. Interacts with oig-4. Interacts with crld-1.

The protein resides in the postsynaptic cell membrane. Its subcellular location is the cell membrane. Functionally, non-alpha subunit of nicotinic acetylcholine receptor (nAChR). Involved in nAChR sensitivity to nicotine and levasimole. This chain is Acetylcholine receptor subunit beta-type unc-29, found in Caenorhabditis elegans.